A 93-amino-acid polypeptide reads, in one-letter code: Regulatory protein RepI (93 aa).

In terms of biological role, this protein is involved in regulating the plasmid copy-number. Increasing the level of this protein results in a higher plasmid copy-number. This is Regulatory protein RepI (repI) from Escherichia coli.